The primary structure comprises 392 residues: Putative RNA-binding protein Luc7-like 2 (392 aa).

Residue Ser-18 is modified to Phosphoserine. The stretch at 102 to 177 (EVSKKRLAET…EAEEVYRNSM (76 aa)) forms a coiled coil. Basic and acidic residues predominate over residues 235 to 257 (KQEKRNQERLKRREEREREEREK). A disordered region spans residues 235 to 392 (KQEKRNQERL…SSEEREAGEI (158 aa)). Over residues 258-321 (LRRSRSHSKN…RSRSHQRSRH (64 aa)) the composition is skewed to basic residues. 2 positions are modified to 5-hydroxylysine; by JMJD6: Lys-266 and Lys-269. Basic and acidic residues-rich tracts occupy residues 337–364 (KERF…DRDR) and 377–392 (RSED…AGEI).

The protein belongs to the Luc7 family. In terms of assembly, interacts with SCNM1. In terms of tissue distribution, all isoforms are expressed in brain, kidney, heart, thymus, stomach, skeletal muscle, testis and spinal cord.

It localises to the nucleus speckle. It is found in the nucleus. The protein resides in the nucleoplasm. Its function is as follows. May bind to RNA via its Arg/Ser-rich domain. This is Putative RNA-binding protein Luc7-like 2 (Luc7l2) from Mus musculus (Mouse).